A 528-amino-acid chain; its full sequence is Tyrosine-protein kinase transforming protein Yes (528 aa).

Positions 1–12 (DKGPAMKYRTDN) are enriched in basic and acidic residues. The disordered stretch occupies residues 1–35 (DKGPAMKYRTDNTPEPISSHVSHYGSDSSQATQSP). The segment covering 18 to 29 (SSHVSHYGSDSS) has biased composition (low complexity). Residues 81–142 (GGGTVFVALY…PSNYVAPADS (62 aa)) enclose the SH3 domain. The region spanning 148–245 (WYFGKMGRKD…GLCHKLTTVC (98 aa)) is the SH2 domain. The region spanning 267–520 (LRLEVKLGQG…YIQSFLEDYF (254 aa)) is the Protein kinase domain. Residues 273–281 (LGQGCFGEV) and lysine 295 contribute to the ATP site. The active-site Proton acceptor is the aspartate 386. Tyrosine 416 carries the phosphotyrosine; by autocatalysis modification.

This sequence belongs to the protein kinase superfamily. Tyr protein kinase family. SRC subfamily.

The catalysed reaction is L-tyrosyl-[protein] + ATP = O-phospho-L-tyrosyl-[protein] + ADP + H(+). In Galliformes (Y73SV), this protein is Tyrosine-protein kinase transforming protein Yes (V-YES).